The chain runs to 487 residues: Glutamyl-tRNA(Gln) amidotransferase subunit A (487 aa).

Active-site charge relay system residues include K79 and S158. The active-site Acyl-ester intermediate is the S182.

This sequence belongs to the amidase family. GatA subfamily. As to quaternary structure, heterotrimer of A, B and C subunits.

It catalyses the reaction L-glutamyl-tRNA(Gln) + L-glutamine + ATP + H2O = L-glutaminyl-tRNA(Gln) + L-glutamate + ADP + phosphate + H(+). Functionally, allows the formation of correctly charged Gln-tRNA(Gln) through the transamidation of misacylated Glu-tRNA(Gln) in organisms which lack glutaminyl-tRNA synthetase. The reaction takes place in the presence of glutamine and ATP through an activated gamma-phospho-Glu-tRNA(Gln). This is Glutamyl-tRNA(Gln) amidotransferase subunit A from Ehrlichia ruminantium (strain Gardel).